The primary structure comprises 552 residues: Transcription factor lcsF (552 aa).

Disordered regions lie at residues 1–132 (MAPA…DLDP), 169–209 (TSSY…ASLS), 232–258 (EATSTTHKEEGSAAKSPGALQQSHWSS), and 297–349 (ELTS…QHGA). The segment at 31-55 (KDRKEKKRIQNRVAQRSYRSRMKAR) is basic motif. The 46-residue stretch at 31–76 (KDRKEKKRIQNRVAQRSYRSRMKARLGELQSRLQAHEEQKAKEEAE) folds into the bZIP domain. The tract at residues 56 to 63 (LGELQSRL) is leucine-zipper. A compositionally biased stretch (basic and acidic residues) spans 64–79 (QAHEEQKAKEEAERCD). Polar residues-rich tracts occupy residues 98-119 (TPPSGNNAGANDTEPSSINSAS) and 169-186 (TSSYIQPSVPTPPVSLSQ). Residues 298 to 347 (LTSTGDLPNATWRPSQQFSGPETTPRSHNAENPTQQQSPINDDTPSTTQH) show a composition bias toward polar residues.

Belongs to the bZIP family.

It localises to the nucleus. Its function is as follows. Transcription factor that regulates the expression of the gene cluster that mediates the biosynthesis of the lipopeptide antibiotics leucinostatins that show extensive biological activities, including antimalarial, antiviral, antibacterial, antifungal, and antitumor activities, as well as phytotoxic. All 20 genes in the cluster are up-regulated to some extent by lcsF, with the exception of lcsL and lcsP, which are down-regulated. This is Transcription factor lcsF from Purpureocillium lilacinum (Paecilomyces lilacinus).